The primary structure comprises 429 residues: Enolase (429 aa).

Q165 serves as a coordination point for (2R)-2-phosphoglycerate. Residue E207 is the Proton donor of the active site. The Mg(2+) site is built by D244, E287, and D314. (2R)-2-phosphoglycerate-binding residues include K339, R368, S369, and K390. The Proton acceptor role is filled by K339.

Belongs to the enolase family. The cofactor is Mg(2+).

Its subcellular location is the cytoplasm. It is found in the secreted. It localises to the cell surface. It catalyses the reaction (2R)-2-phosphoglycerate = phosphoenolpyruvate + H2O. It participates in carbohydrate degradation; glycolysis; pyruvate from D-glyceraldehyde 3-phosphate: step 4/5. Its function is as follows. Catalyzes the reversible conversion of 2-phosphoglycerate (2-PG) into phosphoenolpyruvate (PEP). It is essential for the degradation of carbohydrates via glycolysis. In Roseiflexus sp. (strain RS-1), this protein is Enolase.